The sequence spans 454 residues: MKVIQEKLPASQVGLEIEVPADVTQKAYDDTVRKLARTVNLPGFRKGKVPKQILIQRLGPNRIKASVLEDLIDDSLKAAIAQENIEALGNFQLKSSFDDLISAYKPGEASSFKAAVDVPATVTLNSYKGLSFKAEKSEYDPADLDEFLTQKQRELATLVPVEDRAAQMGDVAIADYEGRYVNDAGEEEEDIIPGTQAEDFSLDLEEGKFIPGFVDGFVGMKPEETKKFTVTFPEDYGNEEMAGKQVSFTVTLKELKSRELPELDDEFASEATNEEFETLAAWQESLEAQLKENAEISTKNSVRRYLLEQLAANNSTELPEVSVNEEITAVLTQQMMEFSRMGIDVNRIFTKDMIPKLRETARPEAEQRLSNSLILTEIAKVEKIEIDTDKFNERLEEAKAELQEGFDEERLQEAIKEELTIDATLDWLEEQSEIEFVPAGTLEAEEAEAANGEE.

Positions 169 to 261 (GDVAIADYEG…LKELKSRELP (93 aa)) constitute a PPIase FKBP-type domain.

Belongs to the FKBP-type PPIase family. Tig subfamily.

Its subcellular location is the cytoplasm. The catalysed reaction is [protein]-peptidylproline (omega=180) = [protein]-peptidylproline (omega=0). Involved in protein export. Acts as a chaperone by maintaining the newly synthesized protein in an open conformation. Functions as a peptidyl-prolyl cis-trans isomerase. In Picosynechococcus sp. (strain ATCC 27264 / PCC 7002 / PR-6) (Agmenellum quadruplicatum), this protein is Trigger factor.